A 471-amino-acid chain; its full sequence is Sestrin-2 (471 aa).

M1 carries the N-acetylmethionine modification. Positions G57–T230 are N-terminal domain; mediates the alkylhydroperoxide reductase activity. Catalysis depends on C116, which acts as the Cysteine sulfenic acid (-SOH) intermediate. Residue K166 forms a Glycyl lysine isopeptide (Lys-Gly) (interchain with G-Cter in ubiquitin) linkage. A disordered region spans residues D212–G241. S240 bears the Phosphoserine mark. Residues A299 to T471 form a C-terminal domain; mediates TORC1 regulation region. Residues T365–T368, T377, and E442 each bind L-leucine.

It belongs to the sestrin family. In terms of assembly, interacts with the GATOR2 complex which is composed of MIOS, SEC13, SEH1L, WDR24 and WDR59; the interaction is negatively regulated by leucine. Conveys leucine availability via direct interaction with SEH1L and WDR24 components of the GATOR2 complex. Interacts with RRAGA, RRAGB, RRAGC and RRAGD; may function as a guanine nucleotide dissociation inhibitor for RRAGs and regulate them. May interact with the TORC2 complex. Interacts with KEAP1, RBX1, SQSTM and ULK1; to regulate the degradation of KEAP1. May also associate with the complex composed of TSC1, TSC2 and the AMP-responsive protein kinase/AMPK to regulate TORC1 signaling. May interact with PRDX1. In terms of processing, phosphorylated by ULK1 at multiple sites. Post-translationally, ubiquitinated at Lys-166 by RNF167 via 'Lys-63'-linked polyubiquitination in response to leucine deprivation: ubiquitination promotes SESN2-interaction with the GATOR2 complex, leading to inhibit the TORC1 signaling pathway. Deubiquitinated at Lys-166 by STAMBPL1, promoting the TORC1 signaling pathway. Ubiquitinated by RNF186; ubiquitination mediates proteasomal degradation.

It is found in the cytoplasm. The enzyme catalyses a hydroperoxide + L-cysteinyl-[protein] = S-hydroxy-L-cysteinyl-[protein] + an alcohol. In terms of biological role, functions as an intracellular leucine sensor that negatively regulates the mTORC1 signaling pathway through the GATOR complex. In absence of leucine, binds the GATOR subcomplex GATOR2 and prevents mTORC1 signaling. Binding of leucine to SESN2 disrupts its interaction with GATOR2 thereby activating the TORC1 signaling pathway. This stress-inducible metabolic regulator also plays a role in protection against oxidative and genotoxic stresses. May negatively regulate protein translation in response to endoplasmic reticulum stress, via mTORC1. May positively regulate the transcription by NFE2L2 of genes involved in the response to oxidative stress by facilitating the SQSTM1-mediated autophagic degradation of KEAP1. May also mediate TP53 inhibition of TORC1 signaling upon genotoxic stress. Moreover, may prevent the accumulation of reactive oxygen species (ROS) through the alkylhydroperoxide reductase activity born by the N-terminal domain of the protein. Was originally reported to contribute to oxidative stress resistance by reducing PRDX1. However, this could not be confirmed. The polypeptide is Sestrin-2 (Bos taurus (Bovine)).